A 50-amino-acid chain; its full sequence is uncharacterized protein (50 aa).

This is an uncharacterized protein from Sulfolobus islandicus filamentous virus (isolate Iceland/Hveragerdi) (SIFV).